We begin with the raw amino-acid sequence, 98 residues long: uncharacterized protein (98 aa).

The span at 1–21 shows a compositional bias: low complexity; sequence MTTSPTTISTTTAATTTTTTP. Residues 1-26 form a disordered region; that stretch reads MTTSPTTISTTTAATTTTTTPGKGTD. The helical transmembrane segment at 29–49 threads the bilayer; sequence MVYIEAMLFSMLVLILLIIVC.

The protein resides in the host membrane. This is an uncharacterized protein from Equine herpesvirus 2 (strain 86/87) (EHV-2).